Consider the following 564-residue polypeptide: Rho guanine nucleotide exchange factor 9 (564 aa).

The region spanning aspartate 8–asparagine 67 is the SH3 domain. Positions arginine 100–glutamate 110 are interaction with GPHN. Residues methionine 103–arginine 287 form the DH domain. Residues glutamate 318–lysine 425 form the PH domain. The interval lysine 451–proline 470 is disordered. Serine 502 is subject to Phosphoserine.

As to quaternary structure, interacts with GPHN.

It is found in the cytoplasm. The protein resides in the postsynaptic density. Its function is as follows. Acts as a guanine nucleotide exchange factor (GEF) for CDC42. Promotes formation of GPHN clusters. The protein is Rho guanine nucleotide exchange factor 9 (ARHGEF9) of Pongo abelii (Sumatran orangutan).